The following is a 107-amino-acid chain: YcgL domain-containing protein Psyc_0800 (107 aa).

Residues 1–95 (MHCDIYKFLK…QDVMRRQAEL (95 aa)) form the YcgL domain.

This Psychrobacter arcticus (strain DSM 17307 / VKM B-2377 / 273-4) protein is YcgL domain-containing protein Psyc_0800.